Here is a 397-residue protein sequence, read N- to C-terminus: Protein shisa-8 (397 aa).

The signal sequence occupies residues 1-38 (MARAGARGLLGGRRPPGLRLALALRLALLLARPPSGRA). Residues 39 to 138 (GAPEAQGPAA…APRDPGRERS (100 aa)) lie on the Extracellular side of the membrane. N-linked (GlcNAc...) asparagine glycosylation occurs at Asn75. A disordered region spans residues 117-136 (TGRPPARARDTAAPRDPGRE). Over residues 123–136 (RARDTAAPRDPGRE) the composition is skewed to basic and acidic residues. A helical transmembrane segment spans residues 139 to 159 (HTAVYAVCGVAALLVLAGIGA). The Cytoplasmic portion of the chain corresponds to 160–397 (RLGLERAHSP…RTNSKTEVTV (238 aa)). Disordered stretches follow at residues 182 to 250 (LLKQ…GGSL) and 281 to 303 (FPALEPSPRQPPARAPRPSPDLP). Pro residues-rich tracts occupy residues 188-197 (PQEPLPPTLG) and 288-303 (PRQPPARAPRPSPDLP).

This sequence belongs to the shisa family. In terms of assembly, interacts with AMPAR subunits GRIA1 and GRIA2.

It localises to the membrane. May regulate trafficking and current kinetics of AMPA-type glutamate receptor (AMPAR) at synapses. The protein is Protein shisa-8 of Homo sapiens (Human).